Reading from the N-terminus, the 329-residue chain is Quinone oxidoreductase (329 aa).

Position 2 is an N-acetylalanine (Ala-2). N6-acetyllysine is present on Lys-23. NADP(+) is bound by residues Tyr-53, 158–161 (SGGV), Gly-181, His-200, Asn-229, 246–249 (VGSR), and 269–271 (VAL). Ser-248 is subject to Phosphoserine.

Belongs to the zinc-containing alcohol dehydrogenase family. Quinone oxidoreductase subfamily. As to quaternary structure, homotetramer.

It localises to the cytoplasm. It carries out the reaction 2 a quinone + NADPH + H(+) = 2 a 1,4-benzosemiquinone + NADP(+). Its function is as follows. Does not have alcohol dehydrogenase activity. Binds NADP and acts through a one-electron transfer process. Orthoquinones, such as 1,2-naphthoquinone or 9,10-phenanthrenequinone, are the best substrates (in vitro). May act in the detoxification of xenobiotics. Interacts with (AU)-rich elements (ARE) in the 3'-UTR of target mRNA species and enhances their stability. NADPH binding interferes with mRNA binding. The chain is Quinone oxidoreductase (CRYZ) from Sus scrofa (Pig).